Reading from the N-terminus, the 389-residue chain is Succinate--CoA ligase [ADP-forming] subunit beta (389 aa).

In terms of domain architecture, ATP-grasp spans 9–236 (RDMFEAHGVP…KDAADPLEAK (228 aa)). Residues Lys45, 52–54 (GRG), Ala94, and Glu99 each bind ATP. Asn191 and Asp205 together coordinate Mg(2+). Residues Asn256 and 318–320 (GIT) each bind substrate.

It belongs to the succinate/malate CoA ligase beta subunit family. Heterotetramer of two alpha and two beta subunits. Mg(2+) serves as cofactor.

The enzyme catalyses succinate + ATP + CoA = succinyl-CoA + ADP + phosphate. It carries out the reaction GTP + succinate + CoA = succinyl-CoA + GDP + phosphate. The protein operates within carbohydrate metabolism; tricarboxylic acid cycle; succinate from succinyl-CoA (ligase route): step 1/1. In terms of biological role, succinyl-CoA synthetase functions in the citric acid cycle (TCA), coupling the hydrolysis of succinyl-CoA to the synthesis of either ATP or GTP and thus represents the only step of substrate-level phosphorylation in the TCA. The beta subunit provides nucleotide specificity of the enzyme and binds the substrate succinate, while the binding sites for coenzyme A and phosphate are found in the alpha subunit. This Arthrobacter sp. (strain FB24) protein is Succinate--CoA ligase [ADP-forming] subunit beta.